Consider the following 120-residue polypeptide: Large ribosomal subunit protein eL18 (120 aa).

Belongs to the eukaryotic ribosomal protein eL18 family.

This is Large ribosomal subunit protein eL18 from Methanococcus maripaludis (strain DSM 14266 / JCM 13030 / NBRC 101832 / S2 / LL).